We begin with the raw amino-acid sequence, 421 residues long: NAD-specific glutamate dehydrogenase (421 aa).

Residues K71 and K95 each contribute to the substrate site. K107 (proton donor) is an active-site residue. The NAD(+) site is built by T191 and N222. A substrate-binding site is contributed by S355.

It belongs to the Glu/Leu/Phe/Val dehydrogenases family. As to quaternary structure, homohexamer.

It carries out the reaction L-glutamate + NAD(+) + H2O = 2-oxoglutarate + NH4(+) + NADH + H(+). In Clostridioides difficile (Peptoclostridium difficile), this protein is NAD-specific glutamate dehydrogenase (gluD).